A 309-amino-acid polypeptide reads, in one-letter code: Ribosomal RNA small subunit methyltransferase H (309 aa).

S-adenosyl-L-methionine is bound by residues 39-41 (GGH), Asp59, Phe83, Asp100, and Gln107.

This sequence belongs to the methyltransferase superfamily. RsmH family.

It localises to the cytoplasm. It carries out the reaction cytidine(1402) in 16S rRNA + S-adenosyl-L-methionine = N(4)-methylcytidine(1402) in 16S rRNA + S-adenosyl-L-homocysteine + H(+). Functionally, specifically methylates the N4 position of cytidine in position 1402 (C1402) of 16S rRNA. This is Ribosomal RNA small subunit methyltransferase H from Delftia acidovorans (strain DSM 14801 / SPH-1).